A 555-amino-acid polypeptide reads, in one-letter code: Glutamate--tRNA ligase (555 aa).

Positions 103-113 (PNPSGPLHIGH) match the 'HIGH' region motif.

This sequence belongs to the class-I aminoacyl-tRNA synthetase family. Glutamate--tRNA ligase type 2 subfamily.

It is found in the cytoplasm. The catalysed reaction is tRNA(Glu) + L-glutamate + ATP = L-glutamyl-tRNA(Glu) + AMP + diphosphate. Functionally, catalyzes the attachment of glutamate to tRNA(Glu) in a two-step reaction: glutamate is first activated by ATP to form Glu-AMP and then transferred to the acceptor end of tRNA(Glu). This is Glutamate--tRNA ligase from Methanobrevibacter smithii (strain ATCC 35061 / DSM 861 / OCM 144 / PS).